The sequence spans 161 residues: 2-C-methyl-D-erythritol 2,4-cyclodiphosphate synthase (161 aa).

A divalent metal cation-binding residues include aspartate 10 and histidine 12. Residues 10 to 12 (DVH) and 36 to 37 (HS) each bind 4-CDP-2-C-methyl-D-erythritol 2-phosphate. Histidine 44 contributes to the a divalent metal cation binding site. Residues 58–60 (DIG), 63–67 (FPDTD), 134–137 (TTTE), phenylalanine 141, and arginine 144 each bind 4-CDP-2-C-methyl-D-erythritol 2-phosphate.

The protein belongs to the IspF family. In terms of assembly, homotrimer. A divalent metal cation is required as a cofactor.

The enzyme catalyses 4-CDP-2-C-methyl-D-erythritol 2-phosphate = 2-C-methyl-D-erythritol 2,4-cyclic diphosphate + CMP. The protein operates within isoprenoid biosynthesis; isopentenyl diphosphate biosynthesis via DXP pathway; isopentenyl diphosphate from 1-deoxy-D-xylulose 5-phosphate: step 4/6. Its function is as follows. Involved in the biosynthesis of isopentenyl diphosphate (IPP) and dimethylallyl diphosphate (DMAPP), two major building blocks of isoprenoid compounds. Catalyzes the conversion of 4-diphosphocytidyl-2-C-methyl-D-erythritol 2-phosphate (CDP-ME2P) to 2-C-methyl-D-erythritol 2,4-cyclodiphosphate (ME-CPP) with a corresponding release of cytidine 5-monophosphate (CMP). This Shewanella putrefaciens (strain CN-32 / ATCC BAA-453) protein is 2-C-methyl-D-erythritol 2,4-cyclodiphosphate synthase.